We begin with the raw amino-acid sequence, 579 residues long: MKDTIRQLIQQALTRLTDDGVLPAGLTPAIQVENTKDKSHGDFASNIAMMLAKPAGLKPRQLAEKLVAALPADASVSKVEIAGPGFLNFFQNSDALARRLEVALADERLGVRKHGDLQRVVVDLSSPNLAKEMHVGHLRSTIIGDAVARVLEFLGDVVIRQNHVGDWGTQFGMLLAHLEEKPASAESELADLEQFYRAAKKRFDESEAFADRARELVVRLQAGEPECLRLWQRFNAISLSHCQEVYERLGVRLTPDDIRGESAYNDELPGIVQALRDKGLLTESEGAQCVFLDEFRNAEGNPLPVIVQKAGGGYLYATTDLASMRYRSQVLKADRVLYFVDQRQALHFQMTFAVARRAGFVRDDTALEHMGFGTMNGADGRPFKTRDGGTVKLIDLLDEAEQRAYALVKGKNPELPEEELRHIARAVGIGAVKYADLSKHRTSDYSFNFELMLSFEGNTAPYLLYAYTRVASVFRKLGREIDEIDGSPAPEAGQELALAARLAQFGEVLGNVAEKGLPHLLCAYLYDLAGLFSSFYENCPILTADTPARQQSRLLLAALTGRTLRQGLELLGLEPLERM.

Positions 127 to 137 match the 'HIGH' region motif; it reads PNLAKEMHVGH.

It belongs to the class-I aminoacyl-tRNA synthetase family. As to quaternary structure, monomer.

It is found in the cytoplasm. The catalysed reaction is tRNA(Arg) + L-arginine + ATP = L-arginyl-tRNA(Arg) + AMP + diphosphate. The chain is Arginine--tRNA ligase from Azotobacter vinelandii (strain DJ / ATCC BAA-1303).